Consider the following 125-residue polypeptide: UPF0102 protein ABO_0585 (125 aa).

This sequence belongs to the UPF0102 family.

The chain is UPF0102 protein ABO_0585 from Alcanivorax borkumensis (strain ATCC 700651 / DSM 11573 / NCIMB 13689 / SK2).